Consider the following 278-residue polypeptide: Poly(3-hydroxyoctanoate) depolymerase (278 aa).

The signal sequence occupies residues 1-33 (MPLRTLLCGLLLAVCLGQHALAASRCSERPRTL).

It localises to the secreted. The enzyme catalyses Hydrolyzes the polyester poly{oxycarbonyl[(R)-2-pentylethylene]} to oligomers.. Its function is as follows. Hydrolysis of poly(3-hydroxyoctanoic acid). The polypeptide is Poly(3-hydroxyoctanoate) depolymerase (phaZ) (Pseudomonas fluorescens).